The following is a 1888-amino-acid chain: E3 ubiquitin-protein ligase UPL3 (1888 aa).

A compositionally biased stretch (basic and acidic residues) spans 1–10 (METRSRKRAE). A disordered region spans residues 1 to 157 (METRSRKRAE…NGGFMHPNMS (157 aa)). Residues 41–81 (LSSSSSSSLAPTPPSSSTTTRSRSSRSAAAAAPMDTSTDSS) are compositionally biased toward low complexity. The segment covering 97–124 (NSDKGKEKEHDVRIRERERERDRAREQL) has biased composition (basic and acidic residues). Residues 137 to 146 (DEDDDNDSED) are compositionally biased toward acidic residues. ARM repeat units follow at residues 227 to 267 (EDSL…HLCD), 270 to 310 (PSSC…KISQ), 312 to 349 (HPTA…NMCK), and 351 to 390 (LPSD…RIAE). Disordered regions lie at residues 660–711 (KPSH…IGAN), 970–1119 (ALKP…LPMC), 1134–1157 (DDDG…GAAA), and 1280–1307 (RLSV…VESQ). Residues 986–1002 (PSGAGVSSPSSSTPAST) are compositionally biased toward low complexity. Over residues 1019 to 1029 (TSKKDPVHEKG) the composition is skewed to basic and acidic residues. Positions 1076-1113 (SSEDEELEISPVDIDDALVIEEDDISDDEDDDNEDVLD) are enriched in acidic residues. 2 stretches are compositionally biased toward low complexity: residues 1148-1157 (ASGGTSGAAA) and 1286-1303 (ASST…TNSS). Positions 1377-1451 (AKVPLDEFVN…ALNRLQQQQG (75 aa)) are K-box. An HECT domain is found at 1490 to 1888 (MYSSQKAVLE…NEGQGSFDLS (399 aa)). Cys1855 serves as the catalytic Glycyl thioester intermediate.

The protein belongs to the UPL family. K-HECT subfamily. In terms of tissue distribution, widely expressed.

The enzyme catalyses S-ubiquitinyl-[E2 ubiquitin-conjugating enzyme]-L-cysteine + [acceptor protein]-L-lysine = [E2 ubiquitin-conjugating enzyme]-L-cysteine + N(6)-ubiquitinyl-[acceptor protein]-L-lysine.. It participates in protein modification; protein ubiquitination. Functionally, probable E3 ubiquitin-protein ligase which mediates ubiquitination and subsequent proteasomal degradation of target proteins. Involved in the repression of endoreduplication process and the cell morphogenesis in the trichomes. This chain is E3 ubiquitin-protein ligase UPL3 (UPL3), found in Arabidopsis thaliana (Mouse-ear cress).